The sequence spans 724 residues: Degenerin mec-10 (724 aa).

Topologically, residues 1–125 (MNRGPPNPRM…GQAPNSLYRA (125 aa)) are cytoplasmic. Residues 126–146 (VWVFLLLICAIQFINQAVAVI) traverse the membrane as a helical segment. Residues 147 to 684 (QKYQKMDKIT…FGGHLGLWSG (538 aa)) lie on the Extracellular side of the membrane. N-linked (GlcNAc...) asparagine glycosylation is found at asparagine 294, asparagine 370, asparagine 463, asparagine 605, and asparagine 624. Residues 685-705 (VSVMTCCEFVCLVLELLYMAV) form a helical membrane-spanning segment. At 706 to 724 (THHITQERIRRRENAANEF) the chain is on the cytoplasmic side.

The protein belongs to the amiloride-sensitive sodium channel (TC 1.A.6) family. The channel is probably composed of at least the mec-2, mec-4, mec-6 and mec-10 subunits.

It is found in the cell membrane. In terms of biological role, amiloride-sensitive sodium channel subunit required for mechanosensory transduction (touch sensitivity). Negatively regulates the turning step of male mating behavior. This is Degenerin mec-10 from Caenorhabditis briggsae.